A 1462-amino-acid chain; its full sequence is Gag-Pro-Pol polyprotein (1462 aa).

G2 carries N-myristoyl glycine; by host lipidation. The interval 93-142 (QIPSRPAPPPPSSSTHDPPDSDPQIPPPYVEPTAPQVLPVMHPHGAPPNH) is disordered. At S105 the chain carries Phosphoserine; by host MAPK1. The PPXY motif signature appears at 118 to 121 (PPPY). The PTAP/PSAP motif signature appears at 124–127 (PTAP). 2 CCHC-type zinc fingers span residues 355–372 (QPCFRCGKAGHWSRDCTQ) and 378–395 (GPCPLCQDPTHWKRDCPR). Residues 476-554 (IEALLDTGAD…NNWAIIGRDA (79 aa)) enclose the Peptidase A2 domain. The Protease; shared with dimeric partner role is filled by D481. The Reverse transcriptase domain occupies 614-804 (LEAGHIEPYT…GTIKFLGQII (191 aa)). Mg(2+)-binding residues include D680, D755, D756, D1040, E1074, D1096, D1157, D1230, and D1287. The region spanning 1031–1165 (INTAPCLFSD…TDALLITPVL (135 aa)) is the RNase H type-1 domain. In terms of domain architecture, Integrase catalytic spans 1219–1388 (RGLLPNHIWQ…QPIPETHSLS (170 aa)). Positions 1393-1443 (HWYYFKLPGLNSRQWKGPQEALQEAAGAALIPVSASSAQWIPWRLLKRAAC) form a DNA-binding region, integrase-type.

In terms of assembly, homodimer; the homodimers are part of the immature particles. Interacts with human TSG101 and NEDD4; these interactions are essential for budding and release of viral particles. Homodimer; further assembles as homohexamers. The cofactor is Mg(2+). Phosphorylation of the matrix protein p19 by MAPK1 seems to play a role in budding. In terms of processing, myristoylated. Myristoylation of the matrix (MA) domain mediates the transport and binding of Gag polyproteins to the host plasma membrane and is required for the assembly of viral particles. Post-translationally, specific enzymatic cleavages by the viral protease yield mature proteins. The polyprotein is cleaved during and after budding, this process is termed maturation. The protease is autoproteolytically processed at its N- and C-termini.

It is found in the virion. It catalyses the reaction Endonucleolytic cleavage to 5'-phosphomonoester.. The catalysed reaction is DNA(n) + a 2'-deoxyribonucleoside 5'-triphosphate = DNA(n+1) + diphosphate. Its function is as follows. The matrix domain targets Gag, Gag-Pro and Gag-Pro-Pol polyproteins to the plasma membrane via a multipartite membrane binding signal, that includes its myristoylated N-terminus. Matrix protein. In terms of biological role, forms the spherical core of the virus that encapsulates the genomic RNA-nucleocapsid complex. Functionally, binds strongly to viral nucleic acids and promote their aggregation. Also destabilizes the nucleic acids duplexes via highly structured zinc-binding motifs. Its function is as follows. The aspartyl protease mediates proteolytic cleavages of Gag and Gag-Pol polyproteins during or shortly after the release of the virion from the plasma membrane. Cleavages take place as an ordered, step-wise cascade to yield mature proteins. This process is called maturation. Displays maximal activity during the budding process just prior to particle release from the cell (Potential). Cleaves the translation initiation factor eIF4G leading to the inhibition of host cap-dependent translation. RT is a multifunctional enzyme that converts the viral RNA genome into dsDNA in the cytoplasm, shortly after virus entry into the cell. This enzyme displays a DNA polymerase activity that can copy either DNA or RNA templates, and a ribonuclease H (RNase H) activity that cleaves the RNA strand of RNA-DNA heteroduplexes in a partially processive 3' to 5'-endonucleasic mode. Conversion of viral genomic RNA into dsDNA requires many steps. A tRNA-Pro binds to the primer-binding site (PBS) situated at the 5'-end of the viral RNA. RT uses the 3' end of the tRNA primer to perform a short round of RNA-dependent minus-strand DNA synthesis. The reading proceeds through the U5 region and ends after the repeated (R) region which is present at both ends of viral RNA. The portion of the RNA-DNA heteroduplex is digested by the RNase H, resulting in a ssDNA product attached to the tRNA primer. This ssDNA/tRNA hybridizes with the identical R region situated at the 3' end of viral RNA. This template exchange, known as minus-strand DNA strong stop transfer, can be either intra- or intermolecular. RT uses the 3' end of this newly synthesized short ssDNA to perform the RNA-dependent minus-strand DNA synthesis of the whole template. RNase H digests the RNA template except for a polypurine tract (PPT) situated at the 5' end of the genome. It is not clear if both polymerase and RNase H activities are simultaneous. RNase H probably can proceed both in a polymerase-dependent (RNA cut into small fragments by the same RT performing DNA synthesis) and a polymerase-independent mode (cleavage of remaining RNA fragments by free RTs). Secondly, RT performs DNA-directed plus-strand DNA synthesis using the PPT that has not been removed by RNase H as primer. PPT and tRNA primers are then removed by RNase H. The 3' and 5' ssDNA PBS regions hybridize to form a circular dsDNA intermediate. Strand displacement synthesis by RT to the PBS and PPT ends produces a blunt ended, linear dsDNA copy of the viral genome that includes long terminal repeats (LTRs) at both ends. In terms of biological role, catalyzes viral DNA integration into the host chromosome, by performing a series of DNA cutting and joining reactions. This is Gag-Pro-Pol polyprotein (gag-pro-pol) from Human T-cell leukemia virus 1 (isolate Caribbea HS-35 subtype A) (HTLV-1).